A 398-amino-acid chain; its full sequence is S-adenosylmethionine synthase 2 (398 aa).

His16 contributes to the ATP binding site. Asp18 is a binding site for Mg(2+). A K(+)-binding site is contributed by Glu51. Residues Glu64 and Gln108 each contribute to the L-methionine site. The flexible loop stretch occupies residues 108–118; that stretch reads QSADIAQGVDA. ATP-binding positions include 176 to 178, 242 to 243, Asp251, 257 to 258, Ala274, and Lys278; these read DSK, KF, and RK. An L-methionine-binding site is contributed by Asp251. Position 282 (Lys282) interacts with L-methionine.

The protein belongs to the AdoMet synthase family. Homotetramer; dimer of dimers. Mg(2+) is required as a cofactor. The cofactor is K(+).

Its subcellular location is the cytoplasm. It catalyses the reaction L-methionine + ATP + H2O = S-adenosyl-L-methionine + phosphate + diphosphate. It functions in the pathway amino-acid biosynthesis; S-adenosyl-L-methionine biosynthesis; S-adenosyl-L-methionine from L-methionine: step 1/1. Its function is as follows. Catalyzes the formation of S-adenosylmethionine (AdoMet) from methionine and ATP. The overall synthetic reaction is composed of two sequential steps, AdoMet formation and the subsequent tripolyphosphate hydrolysis which occurs prior to release of AdoMet from the enzyme. In Rhodopseudomonas palustris (strain BisB18), this protein is S-adenosylmethionine synthase 2.